Here is a 184-residue protein sequence, read N- to C-terminus: ATP synthase subunit b, chloroplastic (184 aa).

A helical membrane pass occupies residues 27–49 (LATNPINLSVVLGVLIFFGKGVL).

It belongs to the ATPase B chain family. F-type ATPases have 2 components, F(1) - the catalytic core - and F(0) - the membrane proton channel. F(1) has five subunits: alpha(3), beta(3), gamma(1), delta(1), epsilon(1). F(0) has four main subunits: a(1), b(1), b'(1) and c(10-14). The alpha and beta chains form an alternating ring which encloses part of the gamma chain. F(1) is attached to F(0) by a central stalk formed by the gamma and epsilon chains, while a peripheral stalk is formed by the delta, b and b' chains.

The protein resides in the plastid. It is found in the chloroplast thylakoid membrane. In terms of biological role, f(1)F(0) ATP synthase produces ATP from ADP in the presence of a proton or sodium gradient. F-type ATPases consist of two structural domains, F(1) containing the extramembraneous catalytic core and F(0) containing the membrane proton channel, linked together by a central stalk and a peripheral stalk. During catalysis, ATP synthesis in the catalytic domain of F(1) is coupled via a rotary mechanism of the central stalk subunits to proton translocation. Component of the F(0) channel, it forms part of the peripheral stalk, linking F(1) to F(0). This Platanus occidentalis (Sycamore) protein is ATP synthase subunit b, chloroplastic.